The chain runs to 353 residues: Uroporphyrinogen decarboxylase (353 aa).

Substrate contacts are provided by residues 27-31 (RQAGR), Phe-46, Asp-76, Tyr-152, Ser-207, and His-321.

Belongs to the uroporphyrinogen decarboxylase family. In terms of assembly, homodimer.

It is found in the cytoplasm. The catalysed reaction is uroporphyrinogen III + 4 H(+) = coproporphyrinogen III + 4 CO2. It participates in porphyrin-containing compound metabolism; protoporphyrin-IX biosynthesis; coproporphyrinogen-III from 5-aminolevulinate: step 4/4. Its function is as follows. Catalyzes the decarboxylation of four acetate groups of uroporphyrinogen-III to yield coproporphyrinogen-III. In Listeria monocytogenes serotype 4b (strain F2365), this protein is Uroporphyrinogen decarboxylase.